A 178-amino-acid chain; its full sequence is MKQLLDFLPLIVFFVVYKLHDIFWATAALIVATALAVIYSWYKYRKVEKMTLVTFVLVAVFGGLTIYFHNAEFIKWKVTIIYALFAGALLIGQWVMKKPLIQSMLGKEITLPAHAWSRLNIAWALFFIFCGLLNIYVAFWLPEAVWMNFKVFGIPGLTLVFTLLSGVYIYRHMPQEEK.

5 helical membrane passes run 22–42, 50–70, 76–96, 121–141, and 149–169; these read IFWA…YSWY, MTLV…YFHN, WKVT…QWVM, IAWA…AFWL, and FKVF…GVYI.

This sequence belongs to the YciB family.

It is found in the cell inner membrane. Plays a role in cell envelope biogenesis, maintenance of cell envelope integrity and membrane homeostasis. This is Inner membrane-spanning protein YciB from Cronobacter sakazakii (strain ATCC BAA-894) (Enterobacter sakazakii).